We begin with the raw amino-acid sequence, 428 residues long: Adenylosuccinate synthetase (428 aa).

GTP contacts are provided by residues 12 to 18 (GDEGKGK) and 40 to 42 (GHS). The active-site Proton acceptor is the D13. Residues D13 and G40 each contribute to the Mg(2+) site. IMP is bound by residues 13–16 (DEGK), 38–41 (NAGH), T128, R142, Q223, T238, and R302. H41 functions as the Proton donor in the catalytic mechanism. Substrate is bound at residue 298–304 (VTTGRPR). Residues R304, 330 to 332 (KLD), and 412 to 414 (GTG) each bind GTP.

Belongs to the adenylosuccinate synthetase family. Homodimer. Mg(2+) serves as cofactor.

It localises to the cytoplasm. It catalyses the reaction IMP + L-aspartate + GTP = N(6)-(1,2-dicarboxyethyl)-AMP + GDP + phosphate + 2 H(+). The protein operates within purine metabolism; AMP biosynthesis via de novo pathway; AMP from IMP: step 1/2. Functionally, plays an important role in the de novo pathway of purine nucleotide biosynthesis. Catalyzes the first committed step in the biosynthesis of AMP from IMP. This Bifidobacterium longum (strain DJO10A) protein is Adenylosuccinate synthetase.